The chain runs to 158 residues: Cyclic pyranopterin monophosphate synthase (158 aa).

Residues 74-76 (MCH) and 112-113 (ME) each bind substrate. Residue Asp127 is part of the active site.

This sequence belongs to the MoaC family. As to quaternary structure, homohexamer; trimer of dimers.

The enzyme catalyses (8S)-3',8-cyclo-7,8-dihydroguanosine 5'-triphosphate = cyclic pyranopterin phosphate + diphosphate. It participates in cofactor biosynthesis; molybdopterin biosynthesis. Functionally, catalyzes the conversion of (8S)-3',8-cyclo-7,8-dihydroguanosine 5'-triphosphate to cyclic pyranopterin monophosphate (cPMP). This Helicobacter pylori (strain P12) protein is Cyclic pyranopterin monophosphate synthase.